The chain runs to 377 residues: Chaperone protein DnaJ (377 aa).

One can recognise a J domain in the interval 5–70; that stretch reads DYYEILGVSR…QKRAAYDQYG (66 aa). The CR-type zinc finger occupies 132 to 210; that stretch reads GVTKEIRIPT…CHGHGRIEKS (79 aa). Zn(2+) contacts are provided by Cys-145, Cys-148, Cys-162, Cys-165, Cys-184, Cys-187, Cys-198, and Cys-201. CXXCXGXG motif repeat units follow at residues 145–152, 162–169, 184–191, and 198–205; these read CDVCHGSG, CPTCHGAG, CPHCHGRG, and CNKCHGHG.

Belongs to the DnaJ family. As to quaternary structure, homodimer. It depends on Zn(2+) as a cofactor.

It localises to the cytoplasm. Functionally, participates actively in the response to hyperosmotic and heat shock by preventing the aggregation of stress-denatured proteins and by disaggregating proteins, also in an autonomous, DnaK-independent fashion. Unfolded proteins bind initially to DnaJ; upon interaction with the DnaJ-bound protein, DnaK hydrolyzes its bound ATP, resulting in the formation of a stable complex. GrpE releases ADP from DnaK; ATP binding to DnaK triggers the release of the substrate protein, thus completing the reaction cycle. Several rounds of ATP-dependent interactions between DnaJ, DnaK and GrpE are required for fully efficient folding. Also involved, together with DnaK and GrpE, in the DNA replication of plasmids through activation of initiation proteins. The protein is Chaperone protein DnaJ of Edwardsiella ictaluri (strain 93-146).